We begin with the raw amino-acid sequence, 845 residues long: Receptor-like protein Cf-9 homolog (845 aa).

The N-terminal stretch at 1–19 is a signal peptide; that stretch reads MGCVKLVFFMLLKLDLLEF. The interval 20-70 is N-cap; that stretch reads KNMFTVNPNASDYCYDYTDQRMQSYPRTLFWNKSTDCCSWDGIHCDETTGQ. The Extracellular segment spans residues 20–794; that stretch reads KNMFTVNPNA…EEDSPMISWQ (775 aa). N-linked (GlcNAc...) asparagine glycans are attached at residues Asn28, Asn51, and Asn88. An LRR 1; degenerate repeat occupies 71-94; it reads VVELDLRCSQLQGKFHSNSSLFQL. 25 LRR repeats span residues 95-118, 119-143, 144-171, 172-193, 194-217, 219-242, 244-266, 267-291, 292-316, 318-338, 340-364, 365-388, 390-410, 411-434, 436-458, 459-482, 484-506, 507-531, 532-554, 555-579, 581-605, 649-672, 673-696, 698-721, and 723-741; these read SNLKRLDLSFNDFTGSLISPKFGE, FSDLTHLDLSDSNFTGVIPSEISHL, SKLHVLRIHDLNELSLGPHNFELLLKNL, TQLRELNLDSVNISSTIPSNFS, SHLTNLWLPYTELRGVLPERVFHL, DLEFLHLSYNPQLTVRFPTTKWNS, ASLMKLYVHSVNIADRIPESFSH, LTSLHALYMGRCNLSGHIPKPLWNL, TNIESLFLGDNHLEGPIPQLTRFEK, KRLSLGNNNLHGGLEFLSFNR, WTQLEILYFSSNYLTGPIPSNVSGL, QNLGWLFLSSNHLNGSIPSWIFSL, SLVVLDLSNNTFSGKIQEFKS, KTLSTVTLKQNQLEGPIPNSLLNQ, SLQFLLLSHNNISGYISSSICNL, KTLMVLDLGSNNLEGTIPQCVGER, EYLLDLDLSNNRLSGTINTTFSI, GNSFKAISLHGNKLTGKVPRSLINC, KYLKLLDLGNNQLNDTFPNWLGY, LSQLKILSLRSNKLHGPIKSSGSTN, FMRLQILDLSSNGFSGNLPERILGN, LDSNMIINLSKNRFEGHIPSIIGD, LVGLRTLNLSRNALEGHIPASFQN, SVLESLDLSSNRISGEIPQQLASL, and FLEVLNLSHNHLVGCIPKG. Asn131, Asn170, Asn183, and Asn191 each carry an N-linked (GlcNAc...) asparagine glycan. Asn241 carries an N-linked (GlcNAc...) asparagine glycan. Residues Asn279 and Asn290 are each glycosylated (N-linked (GlcNAc...) asparagine). Residues Asn337, Asn360, Asn378, and Asn398 are each glycosylated (N-linked (GlcNAc...) asparagine). N-linked (GlcNAc...) asparagine glycosylation occurs at Asn446. An N-linked (GlcNAc...) asparagine glycan is attached at Asn501. A glycan (N-linked (GlcNAc...) asparagine) is linked at Asn545. N-linked (GlcNAc...) asparagine glycans are attached at residues Asn656, Asn680, and Asn696. 2 N-linked (GlcNAc...) asparagine glycosylation sites follow: Asn728 and Asn749. Positions 742–794 are C-cap/acidic domain; the sequence is KQFDSFGNTSYQGNDGLRGFPLSKLCGVDDQVTTPAELDQEEEEEDSPMISWQ. Residues 795–815 traverse the membrane as a helical segment; that stretch reads GVLVGYGCGLVIGLSVIYIMW. The Cytoplasmic segment spans residues 816–845; that stretch reads STQYPAWFSRMDLKLEHIITTRMKKHKKRY.

This sequence belongs to the RLP family.

The protein localises to the cell membrane. In terms of biological role, at the opposite of its homolog Cf-9 found in S.pimpinellifolium, was not able to confer resistance to the fungal pathogen C.fulvum. This Solanum lycopersicum (Tomato) protein is Receptor-like protein Cf-9 homolog.